Consider the following 807-residue polypeptide: 85/88 kDa calcium-independent phospholipase A2 (807 aa).

Position 13 is a phosphoserine (Ser-13). ANK repeat units follow at residues 120–147 (WTVTHLAVELGIRECFHHSRIISCANST), 151–181 (EGCTPLHLACRKGDSEILVELVQYCHAQMDV), 185–215 (KGETAFHYAVQGDNPQVLQLLGKNASAGLNQ), 219–248 (QGLTPLHLACKMGKQEMVRVLLLCNARCNI), 251–281 (PGGFPIHTAMKFSQKGCAEMIISMDSNQIHS), 286–312 (YGASPLHWAKNAEMARMLLKRGCDVDS), 316–345 (SGNTALHVAVMRNRFDCVMVLLTYGANAGA), 349–378 (HGNTPLHLAMSKDNMEMVKALIVFGAEVDT), and 382–403 (FGETPALIASKISKLITRKALL). 2 consecutive transmembrane segments (helical) span residues 481–501 (LLCLDGGGVKGLVIIQLLIAI) and 512–532 (LFDWVAGTSTGGILALAILHS). Positions 482-666 (LCLDGGGVKG…LANNPTLDAM (185 aa)) constitute a PNPLA domain. The GXGXXG motif lies at 486 to 491 (GGGVKG). The short motif at 518 to 522 (GTSTG) is the GXSXG element. The Nucleophile role is filled by Ser-520. Asp-653 (proton acceptor) is an active-site residue. Residues 653 to 655 (DGG) carry the DGA/G motif. Residues 678 to 687 (RKGQGNKVKK) form a calmodulin-binding (1-9-14 motif) region. The calmodulin-binding (IQ motif) stretch occupies residues 749–760 (AWCEMVGIQYFR).

As to quaternary structure, homodimer formed by catalytic domains tightly interacting through a large hydrophobic interface. The contact area involves 3 alpha helices, several loops and a part of the beta sheet from each monomer. Both active sites of the dimer are in close proximity adopting an open conformation that provide sufficient space for phospholipid access and favoring cooperativity in deacylation-reacylation reactions. Each monomer has 9 ankyrin repeats stacked side-by-side in an elongated structure oriented outwards from the catalytic core. In terms of tissue distribution, expressed in neurons of central and peripheral nervous system. Highly expressed in Purkinje cells in cerebellum and dorsal and ventral horn neurons in the spinal cord. Expressed in testis (at protein level). Expressed in skeletal muscle (at protein level).

The protein localises to the cytoplasm. Its subcellular location is the cell membrane. The protein resides in the mitochondrion. It is found in the cell projection. It localises to the pseudopodium. The enzyme catalyses a 1,2-diacyl-sn-glycero-3-phosphocholine + H2O = a 1-acyl-sn-glycero-3-phosphocholine + a fatty acid + H(+). The catalysed reaction is a 1-O-alkyl-2-acyl-sn-glycero-3-phosphocholine + H2O = a 1-O-alkyl-sn-glycero-3-phosphocholine + a fatty acid + H(+). It carries out the reaction 1,2-dihexadecanoyl-sn-glycero-3-phosphocholine + H2O = 1-hexadecanoyl-sn-glycero-3-phosphocholine + hexadecanoate + H(+). It catalyses the reaction 1-hexadecanoyl-2-(9Z-octadecenoyl)-sn-glycero-3-phosphocholine + H2O = 1-hexadecanoyl-sn-glycero-3-phosphocholine + (9Z)-octadecenoate + H(+). The enzyme catalyses 1-hexadecanoyl-2-(9Z,12Z-octadecadienoyl)-sn-glycero-3-phosphocholine + H2O = (9Z,12Z)-octadecadienoate + 1-hexadecanoyl-sn-glycero-3-phosphocholine + H(+). The catalysed reaction is 1-hexadecanoyl-2-(5Z,8Z,11Z,14Z-eicosatetraenoyl)-sn-glycero-3-phosphocholine + H2O = 1-hexadecanoyl-sn-glycero-3-phosphocholine + (5Z,8Z,11Z,14Z)-eicosatetraenoate + H(+). It carries out the reaction 1-octadecanoyl-2-(5Z,8Z,11Z,14Z-eicosatetraenoyl)-sn-glycero-3-phosphocholine + H2O = 1-octadecanoyl-sn-glycero-3-phosphocholine + (5Z,8Z,11Z,14Z)-eicosatetraenoate + H(+). It catalyses the reaction 1-hexadecanoyl-2-(5Z,8Z,11Z,14Z-eicosatetraenoyl)-sn-glycero-3-phosphoethanolamine + H2O = 1-hexadecanoyl-sn-glycero-3-phosphoethanolamine + (5Z,8Z,11Z,14Z)-eicosatetraenoate + H(+). The enzyme catalyses 1,2-dihexadecanoyl-sn-glycero-3-phosphate + H2O = 1-hexadecanoyl-sn-glycero-3-phosphate + hexadecanoate + H(+). The catalysed reaction is a 1-acyl-sn-glycero-3-phosphocholine + H2O = sn-glycerol 3-phosphocholine + a fatty acid + H(+). It carries out the reaction 1-hexadecanoyl-sn-glycero-3-phosphocholine + H2O = sn-glycerol 3-phosphocholine + hexadecanoate + H(+). It catalyses the reaction 1-(5Z,8Z,11Z,14Z-eicosatetraenoyl)-sn-glycero-3-phosphocholine + H2O = sn-glycerol 3-phosphocholine + (5Z,8Z,11Z,14Z)-eicosatetraenoate + H(+). The enzyme catalyses 2-(5Z,8Z,11Z,14Z)-eicosatetraenoyl-sn-glycero-3-phosphocholine + H2O = sn-glycerol 3-phosphocholine + (5Z,8Z,11Z,14Z)-eicosatetraenoate + H(+). The catalysed reaction is 1-O-hexadecyl-2-(5Z,8Z,11Z,14Z)-eicosatetraenoyl-sn-glycero-3-phosphocholine + H2O = 1-O-hexadecyl-sn-glycero-3-phosphocholine + (5Z,8Z,11Z,14Z)-eicosatetraenoate + H(+). It carries out the reaction 1-O-hexadecyl-2-acetyl-sn-glycero-3-phosphocholine + H2O = 1-O-hexadecyl-sn-glycero-3-phosphocholine + acetate + H(+). It catalyses the reaction hexadecanoyl-CoA + H2O = hexadecanoate + CoA + H(+). The enzyme catalyses 1',3'-bis[1,2-di-(9Z-octadecenoyl)-sn-glycero-3-phospho]-glycerol + H2O = 1'-[1,2-di-(9Z-octadecenoyl)-sn-glycero-3-phospho]-3'-[1-(9Z-octadecenoyl)-sn-glycero-3-phospho]-glycerol + (9Z)-octadecenoate + H(+). The catalysed reaction is 1'-[1,2-di-(9Z-octadecenoyl)-sn-glycero-3-phospho]-3'-[1-(9Z-octadecenoyl)-sn-glycero-3-phospho]-glycerol + H2O = 1',3'-bis-[1-(9Z-octadecenoyl)-sn-glycero-3-phospho]-glycerol + (9Z)-octadecenoate + H(+). It carries out the reaction 1',3'-bis-[1,2-di-(9Z,12Z-octadecadienoyl)-sn-glycero-3-phospho]-glycerol + H2O = 1'-[1,2-di-(9Z,12Z-octadecadienoyl)-sn-glycero-3-phospho]-3'-[1-(9Z,12Z-octadecadienoyl)-sn-glycero-3-phospho]-glycerol + (9Z,12Z)-octadecadienoate + H(+). It catalyses the reaction 1-octadecanoyl-2-(15-hydroxy-(5Z,8Z,11Z,13E)-eicosatetraenoyl)-sn-glycero-3-phosphoethanolamine + H2O = 1-octadecanoyl-sn-glycero-3-phosphoethanolamine + 15-hydroxy-(5Z,8Z,11Z,13E)-eicosatetraenoate + H(+). Its activity is regulated as follows. Inhibited by calcium-activated calmodulin. Activated by ATP. Inhibited by bromoenol lactone (BEL). In terms of biological role, calcium-independent phospholipase involved in phospholipid remodeling with implications in cellular membrane homeostasis, mitochondrial integrity and signal transduction. Hydrolyzes the ester bond of the fatty acyl group attached at sn-1 or sn-2 position of phospholipids (phospholipase A1 and A2 activity respectively), producing lysophospholipids that are used in deacylation-reacylation cycles. Hydrolyzes both saturated and unsaturated long fatty acyl chains in various glycerophospholipid classes such as phosphatidylcholines, phosphatidylethanolamines and phosphatidates, with a preference for hydrolysis at sn-2 position. Can further hydrolyze lysophospholipids carrying saturated fatty acyl chains (lysophospholipase activity). Upon oxidative stress, contributes to remodeling of mitochondrial phospholipids in pancreatic beta cells, in a repair mechanism to reduce oxidized lipid content. Preferentially hydrolyzes oxidized polyunsaturated fatty acyl chains from cardiolipins, yielding monolysocardiolipins that can be reacylated with unoxidized fatty acyls to regenerate native cardiolipin species. Hydrolyzes oxidized glycerophosphoethanolamines present in pancreatic islets, releasing oxidized polyunsaturated fatty acids such as hydroxyeicosatetraenoates (HETEs). Has thioesterase activity toward fatty-acyl CoA releasing CoA-SH known to facilitate fatty acid transport and beta-oxidation in mitochondria particularly in skeletal muscle. Plays a role in regulation of membrane dynamics and homeostasis. Selectively hydrolyzes sn-2 arachidonoyl group in plasmalogen phospholipids, structural components of lipid rafts and myelin. Regulates F-actin polymerization at the pseudopods, which is required for both speed and directionality of MCP1/CCL2-induced monocyte chemotaxis. Targets membrane phospholipids to produce potent lipid signaling messengers. Generates lysophosphatidate (LPA, 1-acyl-glycerol-3-phosphate), which acts via G-protein receptors in various cell types. Has phospholipase A2 activity toward platelet-activating factor (PAF, 1-O-alkyl-2-acetyl-sn-glycero-3-phosphocholine), likely playing a role in inactivation of this potent pro-inflammatory signaling lipid. In response to glucose, amplifies calcium influx in pancreatic beta cells to promote INS secretion. This chain is 85/88 kDa calcium-independent phospholipase A2 (Pla2g6), found in Mus musculus (Mouse).